Reading from the N-terminus, the 150-residue chain is 3-hydroxyacyl-[acyl-carrier-protein] dehydratase FabZ (150 aa).

His51 is a catalytic residue.

It belongs to the thioester dehydratase family. FabZ subfamily.

The protein localises to the cytoplasm. It catalyses the reaction a (3R)-hydroxyacyl-[ACP] = a (2E)-enoyl-[ACP] + H2O. Involved in unsaturated fatty acids biosynthesis. Catalyzes the dehydration of short chain beta-hydroxyacyl-ACPs and long chain saturated and unsaturated beta-hydroxyacyl-ACPs. This is 3-hydroxyacyl-[acyl-carrier-protein] dehydratase FabZ from Legionella pneumophila subsp. pneumophila (strain Philadelphia 1 / ATCC 33152 / DSM 7513).